The chain runs to 1765 residues: Tight junction protein ZO-1 (1765 aa).

Residues 23-110 form the PDZ 1 domain; the sequence is TVTLHRAPGF…NAKITIRRKK (88 aa). Over residues 102–112 the composition is skewed to basic residues; the sequence is AKITIRRKKKV. Residues 102-189 form a disordered region; sequence AKITIRRKKK…QPAKPTKVTL (88 aa). Acidic residues predominate over residues 123-136; sequence PVSDNEDDSYDEDV. Position 125 is a phosphoserine (Ser125). Tyr132 bears the Phosphotyrosine mark. Over residues 149–175 the composition is skewed to basic and acidic residues; sequence RRGEKSWARDRSASRDRSLSPRSDRRS. Ser175, Ser178, and Ser179 each carry phosphoserine. Thr185 is modified (phosphothreonine). The 79-residue stretch at 186–264 folds into the PDZ 2 domain; sequence KVTLVKSRKN…KLKMVVQRDE (79 aa). Phosphoserine occurs at positions 212 and 241. Thr267 bears the Phosphothreonine mark. Phosphoserine is present on residues Ser275, Ser277, Ser280, Ser284, Ser290, Ser294, Ser297, Ser300, Ser323, Ser329, Ser334, Ser337, and Ser353. Residues 296–363 are disordered; the sequence is ASDHSVRSHD…TPVKHVDDHT (68 aa). Residues 299–308 are compositionally biased toward basic and acidic residues; the sequence is HSVRSHDRPP. Residues 325-338 are compositionally biased toward polar residues; that stretch reads HSTQSPQQPSNGSL. Thr354 is modified (phosphothreonine). The PDZ 3 domain occupies 421 to 502; sequence SMKLVKFRKG…GEEVTILAQK (82 aa). The SH3 domain maps to 516 to 584; the sequence is GDSFYIRTHF…PNKNRAEQLA (69 aa). 2 positions are modified to phosphoserine: Ser617 and Ser622. Positions 633–876 are occludin (OCLN)-binding region; that stretch reads YERVVLREAG…GTPPESAITR (244 aa). Positions 690–791 constitute a Guanylate kinase-like domain; sequence RLHTIKQIID…WYGALKEAIQ (102 aa). Thr809 carries the phosphothreonine modification. Phosphoserine is present on residues Ser810 and Ser821. At Tyr822 the chain carries Phosphotyrosine. A phosphoserine mark is found at Ser824, Ser828, and Ser837. Disordered regions lie at residues 825–941 and 1023–1042; these read APGS…PASS and ALGHPGQRLDKEPNPAYDPQ. A phosphothreonine mark is found at Thr846, Thr848, Thr854, Thr861, and Thr868. The segment covering 879–892 has biased composition (basic and acidic residues); sequence EPVREDSSGMHHEN. The span at 893–906 shows a compositional bias: low complexity; it reads QTYPPYSPQAQPQA. Position 912 is a phosphoserine (Ser912). Position 1071 is a phosphoserine (Ser1071). Positions 1092 to 1585 are disordered; sequence SYYDDKQPYP…SSTQPPEFDS (494 aa). Basic and acidic residues predominate over residues 1106-1124; that stretch reads DTQHPRDLDSRQHPEEASE. Residues Tyr1139 and Tyr1164 each carry the phosphotyrosine modification. Residues 1150–1370 are actin-binding region (ABR); sequence RTSTLRHEEQ…FDRRSFESKP (221 aa). Basic and acidic residues-rich tracts occupy residues 1268 to 1285 and 1335 to 1346; these read KMFENKRSASLENKKDVN and PPEDIVRSNHYD. Tyr1353 is modified (phosphotyrosine). Ser1365 is subject to Phosphoserine. Residues 1388-1399 show a composition bias toward low complexity; that stretch reads SQSQPNFSSYSS. A compositionally biased stretch (basic and acidic residues) spans 1401 to 1418; the sequence is GKPETDAMDRSFSEKRYD. Ser1411 is subject to Phosphoserine. 2 stretches are compositionally biased toward polar residues: residues 1442-1468 and 1509-1519; these read NSSLHIHSKAAQSEGNSVSLDFQNSYI and GAEQTQKTITP. Basic and acidic residues predominate over residues 1535–1544; the sequence is PFERKFESPK. A phosphoserine mark is found at Ser1542 and Ser1614. The ZU5 domain maps to 1631-1765; it reads ATARGIFNSN…NCVSVLIDHF (135 aa).

Belongs to the MAGUK family. In terms of assembly, homodimer. Forms heterodimers TJP3. Forms a heterodimer (via PDZ2 domain) with TJP2/ZO2 (via PDZ2 domain). Interacts with OCLN. Interacts with CALM, claudins, CGN/cingulin, CXADR, GJA12, GJD3 and UBN1. Interacts (via ZU5 domain) with CDC42BPB and MYZAP. Interacts (via PDZ domain) with GJA1. Interacts (via PDZ domains) with ANKRD2. Interacts with BVES (via the C-terminus cytoplasmic tail). Interacts with HSPA4. Interacts with KIRREL1. Interacts with DLL1. Interacts with USP53 (via the C-terminal region). Interacts with DNMBP (via C-terminal domain); required for the apical cell-cell junction localization of DNMBP. Interacts with SPEF1. Interacts (via N-terminus) with CTNNA1. Interacts with CLDN18. Interacts with CLDN16 (via TRV motif); this is a prerequisite for anchoring of CLDN16 at the tight junction. Interacts with PKP1; the interaction facilitates TJP1/ZO-1 localization to the plasma membrane. Phosphorylated at tyrosine redidues in response to epidermal growth factor (EGF). This response is dependent on an intact actin microfilament system. Dephosphorylated by Ptprj.

Its subcellular location is the cell membrane. The protein localises to the cell junction. The protein resides in the tight junction. It localises to the gap junction. TjpP1, Tjp2, and Tjp3 are closely related scaffolding proteins that link tight junction (TJ) transmembrane proteins such as claudins, junctional adhesion molecules, and occludin to the actin cytoskeleton. The tight junction acts to limit movement of substances through the paracellular space and as a boundary between the compositionally distinct apical and basolateral plasma membrane domains of epithelial and endothelial cells. Necessary for lumenogenesis, and particularly efficient epithelial polarization and barrier formation. Plays a role in the regulation of cell migration by targeting Cdc42bpb to the leading edge of migrating cells. Plays an important role in podosome formation and associated function, thus regulating cell adhesion and matrix remodeling. With Tjp2 and Tjp3, participates in the junctional retention and stability of the transcription factor Dbpa, but is not involved in its shuttling to the nucleus. May play a role in mediating cell morphology changes during ameloblast differentiation via its role in tight junctions. In Rattus norvegicus (Rat), this protein is Tight junction protein ZO-1.